Here is a 461-residue protein sequence, read N- to C-terminus: D-phenylhydantoinase (461 aa).

A divalent metal cation-binding residues include His-59, His-61, and Lys-151. N6-carboxylysine is present on Lys-151. Residue Tyr-156 participates in substrate binding. A divalent metal cation contacts are provided by His-182 and His-239. Ser-286 serves as a coordination point for substrate. Position 313 (Asp-313) interacts with a divalent metal cation. Position 335 (Asn-335) interacts with substrate.

It belongs to the metallo-dependent hydrolases superfamily. Hydantoinase/dihydropyrimidinase family. As to quaternary structure, homotetramer. It depends on a divalent metal cation as a cofactor. Post-translationally, carboxylation allows a single lysine to coordinate two divalent metal cations.

The catalysed reaction is D-5-phenylhydantoin + H2O = N-carbamoyl-D-phenylglycine + H(+). In terms of biological role, catalyzes the stereospecific hydrolysis of the cyclic amide bond of D-hydantoin derivatives with an aromatic side chains at the 5'-position. Has no activity on dihydropyrimidines. The physiological function is unknown. The sequence is that of D-phenylhydantoinase from Escherichia coli O17:K52:H18 (strain UMN026 / ExPEC).